A 263-amino-acid chain; its full sequence is 3'-5' ssDNA/RNA exonuclease TatD (263 aa).

A divalent metal cation contacts are provided by Glu-91, His-127, and His-152.

This sequence belongs to the metallo-dependent hydrolases superfamily. TatD-type hydrolase family. TatD subfamily. In terms of assembly, monomer. The cofactor is Mg(2+).

It is found in the cytoplasm. 3'-5' exonuclease that prefers single-stranded DNA and RNA. May play a role in the H(2)O(2)-induced DNA damage repair. The chain is 3'-5' ssDNA/RNA exonuclease TatD from Citrobacter rodentium (strain ICC168) (Citrobacter freundii biotype 4280).